Consider the following 87-residue polypeptide: U15-lycotoxin-Ls1h (87 aa).

An N-terminal signal peptide occupies residues 1–20 (MNSKIFAVLLLLGLLSCVLS). Residues 21 to 66 (DQYCPKSSITACKKMNTRNDCCKDDDCTGGSWCCATPCGNFCKYPT) form the WAP domain. 5 cysteine pairs are disulfide-bonded: C24-C54, C32-C58, C41-C53, C42-C80, and C47-C62.

This sequence belongs to the venom protein 11 family. 01 (wap-1) subfamily. Contains 5 disulfide bonds. In terms of tissue distribution, expressed by the venom gland.

It localises to the secreted. Its function is as follows. Has antibacterial activity. The sequence is that of U15-lycotoxin-Ls1h from Lycosa singoriensis (Wolf spider).